Consider the following 447-residue polypeptide: Tubulin alpha-2 chain (447 aa).

GTP is bound by residues Gln-11, Glu-71, Gly-144, Thr-145, Thr-179, Asn-206, and Asn-228. A Mg(2+)-binding site is contributed by Glu-71. The active site involves Glu-254.

Belongs to the tubulin family. Dimer of alpha and beta chains. A typical microtubule is a hollow water-filled tube with an outer diameter of 25 nm and an inner diameter of 15 nM. Alpha-beta heterodimers associate head-to-tail to form protofilaments running lengthwise along the microtubule wall with the beta-tubulin subunit facing the microtubule plus end conferring a structural polarity. Microtubules usually have 13 protofilaments but different protofilament numbers can be found in some organisms and specialized cells. Mg(2+) serves as cofactor. In terms of processing, undergoes a tyrosination/detyrosination cycle, the cyclic removal and re-addition of a C-terminal tyrosine residue by the enzymes tubulin tyrosine carboxypeptidase (TTCP) and tubulin tyrosine ligase (TTL), respectively.

The protein localises to the cytoplasm. The protein resides in the cytoskeleton. The catalysed reaction is GTP + H2O = GDP + phosphate + H(+). Tubulin is the major constituent of microtubules, a cylinder consisting of laterally associated linear protofilaments composed of alpha- and beta-tubulin heterodimers. Microtubules grow by the addition of GTP-tubulin dimers to the microtubule end, where a stabilizing cap forms. Below the cap, tubulin dimers are in GDP-bound state, owing to GTPase activity of alpha-tubulin. The polypeptide is Tubulin alpha-2 chain (TUBA2) (Eleusine indica (Goosegrass)).